A 574-amino-acid chain; its full sequence is Fusion glycoprotein F0 (574 aa).

The first 25 residues, 1-25 (MATTAMRMIISIIFISTYVTHITLC), serve as a signal peptide directing secretion. Over 26 to 524 (QNITEEFYQS…SVDVGKSTTN (499 aa)) the chain is Extracellular. N-linked (GlcNAc...) asparagine; by host glycosylation is found at Asn-27 and Asn-70. Intrachain disulfides connect Cys-37–Cys-439, Cys-69–Cys-212, Cys-313–Cys-343, Cys-322–Cys-333, Cys-358–Cys-367, Cys-382–Cys-393, and Cys-416–Cys-422. The stretch at 76–96 (VKLIKQELERYNNAVVELQSL) forms a coiled coil. The N-linked (GlcNAc...) asparagine; by host glycan is linked to Asn-120. The fusion peptide stretch occupies residues 137 to 157 (FLGFLLGIGSAIASGVAVSKV). Residues 158 to 209 (LHLEGEVNKIKNALLSTNKAVVSLSNGVSVLTSKVLDLKNYIDKELLPKVNN) adopt a coiled-coil conformation. The stretch at 481–516 (LVFPSDEFDASIAQVNAKINQSLAFIRRSDELLHSV) forms a coiled coil. N-linked (GlcNAc...) asparagine; by host glycosylation is present at Asn-500. Residues 525-550 (VVITTIIIVIVVVILMLIAVGLLFYS) form a helical membrane-spanning segment. Residues 551–574 (KTRSTPIMLGKDQLSGINNLSFSK) lie on the Cytoplasmic side of the membrane.

The protein belongs to the paramyxoviruses fusion glycoprotein family. Homotrimer. Heterodimer with fusion protein F2; disulfide-linked. Part of a complex composed of F1, F2 and G glycoproteins. As a heterodimer with F2, interacts with host RHOA; this interaction facilitates virus-induced syncytium formation. In terms of assembly, homotrimer. Heterodimer with fusion protein F1; disulfide-linked. Part of a complex composed of F1, F2 and G glycoproteins. As a heterodimer with F1, interacts with host RHOA; this interaction facilitates virus-induced syncytium formation. In terms of processing, the F glycoprotein is synthesized as a F0 inactive precursor that is heavily N-glycosylated and processed at two sites by a host furin-like protease probably in the Golgi. The cleavage site between p27 and F1 may occur after endocytosis to yield the mature F1 and F2 proteins. Both cleavages are required for membrane fusion and p27 is released from the processed protein.

The protein localises to the host Golgi apparatus membrane. It is found in the virion membrane. Its subcellular location is the host cell membrane. In terms of biological role, inactive precursor that is cleaved at two sites by a furin-like protease to give rise to the mature F1 and F2 fusion glycoproteins. Functionally, class I viral fusion protein. Under the current model, the protein has at least 3 conformational states: pre-fusion native state, pre-hairpin intermediate state, and post-fusion hairpin state. During viral and plasma cell membrane fusion, the coiled coil regions assume a trimer-of-hairpins structure, positioning the fusion peptide in close proximity to the C-terminal region of the ectodomain. The formation of this structure appears to drive apposition and subsequent fusion of viral and cellular membranes leading to delivery of the nucleocapsid into the cytoplasm. This fusion is pH independent and occurs at the plasma or endosomal membrane. The trimer of F1-F2 (F protein) also facilitates the attachment and entry into the host cell. Later in infection, F protein expressed at the plasma membrane of infected cells can mediate fusion with adjacent cells to form syncytia, a cytopathic effect that could lead to tissue necrosis. Its function is as follows. Major determinant of the species specificity of RSV infection. The trimer of F1-F2 (F protein) also facilitates the attachment and entry into the host cell. Later in infection, F protein expressed at the plasma membrane of infected cells can mediate fusion with adjacent cells to form syncytia, a cytopathic effect that could lead to tissue necrosis. This Bos taurus (Bovine) protein is Fusion glycoprotein F0 (F).